We begin with the raw amino-acid sequence, 527 residues long: Exodeoxyribonuclease 7 large subunit (527 aa).

The disordered stretch occupies residues 499–527 (AGEEGAPPPAAPKKRASRPVVPTKQGSLF).

Belongs to the XseA family. Heterooligomer composed of large and small subunits.

It is found in the cytoplasm. The enzyme catalyses Exonucleolytic cleavage in either 5'- to 3'- or 3'- to 5'-direction to yield nucleoside 5'-phosphates.. Its function is as follows. Bidirectionally degrades single-stranded DNA into large acid-insoluble oligonucleotides, which are then degraded further into small acid-soluble oligonucleotides. The chain is Exodeoxyribonuclease 7 large subunit from Sinorhizobium fredii (strain NBRC 101917 / NGR234).